We begin with the raw amino-acid sequence, 75 residues long: Small ribosomal subunit protein bS18 (75 aa).

It belongs to the bacterial ribosomal protein bS18 family. As to quaternary structure, part of the 30S ribosomal subunit. Forms a tight heterodimer with protein bS6.

Functionally, binds as a heterodimer with protein bS6 to the central domain of the 16S rRNA, where it helps stabilize the platform of the 30S subunit. The protein is Small ribosomal subunit protein bS18 of Clostridioides difficile (strain 630) (Peptoclostridium difficile).